A 1356-amino-acid chain; its full sequence is Serine/threonine-protein kinase PSK1 (1356 aa).

Serine 10 is modified (phosphoserine). The segment at 20-115 is disordered; the sequence is KHAITHKGTS…SVDSTVSSPL (96 aa). Polar residues-rich tracts occupy residues 26–37 and 54–64; these read KGTSSSVASLQT and YDTSLSDVSTP. Residues 99–115 are compositionally biased toward low complexity; sequence LPSTASSSVDSTVSSPL. Phosphoserine occurs at positions 192, 202, 255, 286, and 327. One can recognise a PAS 1 domain in the interval 450–518; sequence RTFTSTKNSA…VLHKLLSTEG (69 aa). A compositionally biased stretch (low complexity) spans 592–608; sequence PTLSSSSTLSLPKMASS. Disordered regions lie at residues 592-612 and 627-660; these read PTLS…PTGS and YTKP…PVRS. In terms of domain architecture, PAS 2 spans 738–807; sequence LKLKIHSLPY…FINDKYPALD (70 aa). Position 926 is a phosphoserine (serine 926). The segment at 948-972 is disordered; it reads DSRAHSQSTLSEQEQVPLENDKDSG. Over residues 952 to 961 the composition is skewed to polar residues; that stretch reads HSQSTLSEQE. Serine 1018, serine 1023, serine 1035, and serine 1055 each carry phosphoserine. Over residues 1021–1032 the composition is skewed to polar residues; it reads TESLADSKSSGK. The disordered stretch occupies residues 1021–1066; it reads TESLADSKSSGKGLSPLEEEKLIDENATENGLAGSPKDEDGIIMTN. Residue threonine 1079 is modified to Phosphothreonine. The Protein kinase domain occupies 1096–1354; that stretch reads FVSLQKMGEG…IDDINNDKWL (259 aa). ATP is bound by residues 1102 to 1110 and lysine 1125; that span reads MGEGAYGKV. The active-site Proton acceptor is the aspartate 1230.

It belongs to the protein kinase superfamily. Ser/Thr protein kinase family.

It localises to the cytoplasm. It catalyses the reaction L-seryl-[protein] + ATP = O-phospho-L-seryl-[protein] + ADP + H(+). The catalysed reaction is L-threonyl-[protein] + ATP = O-phospho-L-threonyl-[protein] + ADP + H(+). In terms of biological role, serine/threonine-protein kinase involved in the control of sugar metabolism and translation. Phosphorylates UGP1, which is required for normal glycogen and beta-(1,6)-glucan synthesis. This phosphorylation shifts glucose partitioning toward cell wall glucan synthesis at the expense of glycogen synthesis. The polypeptide is Serine/threonine-protein kinase PSK1 (PSK1) (Saccharomyces cerevisiae (strain ATCC 204508 / S288c) (Baker's yeast)).